The chain runs to 424 residues: Histidine--tRNA ligase (424 aa).

It belongs to the class-II aminoacyl-tRNA synthetase family. Homodimer.

The protein localises to the cytoplasm. It catalyses the reaction tRNA(His) + L-histidine + ATP = L-histidyl-tRNA(His) + AMP + diphosphate + H(+). The chain is Histidine--tRNA ligase from Staphylococcus epidermidis (strain ATCC 12228 / FDA PCI 1200).